Consider the following 391-residue polypeptide: Thioredoxin-interacting protein (391 aa).

Lys-212 participates in a covalent cross-link: Glycyl lysine isopeptide (Lys-Gly) (interchain with G-Cter in ubiquitin). Phosphoserine is present on Ser-361.

It belongs to the arrestin family. As to quaternary structure, homodimer; disulfide-linked. Interacts with TXN/thioredoxin through its redox-active site. Interacts with transcriptional repressors ZBTB16, ZBTB32 and HDAC1. Interacts with DDIT4. Ubiquitinated; undergoes heterotypic 'Lys-48'-/'Lys-63'-branched polyubiquitination catalyzed by ITCH and UBR5 resulting in proteasomal degradation. Deubiquitinated by USP5, leading to TXNIP stabilization.

The protein localises to the cytoplasm. In terms of biological role, may act as an oxidative stress mediator by inhibiting thioredoxin activity or by limiting its bioavailability. Interacts with COPS5 and restores COPS5-induced suppression of CDKN1B stability, blocking the COPS5-mediated translocation of CDKN1B from the nucleus to the cytoplasm. Functions as a transcriptional repressor, possibly by acting as a bridge molecule between transcription factors and corepressor complexes, and over-expression will induce G0/G1 cell cycle arrest. Required for the maturation of natural killer cells. Acts as a suppressor of tumor cell growth. Inhibits the proteasomal degradation of DDIT4, and thereby contributes to the inhibition of the mammalian target of rapamycin complex 1 (mTORC1). The polypeptide is Thioredoxin-interacting protein (TXNIP) (Pongo abelii (Sumatran orangutan)).